Consider the following 427-residue polypeptide: Adenylosuccinate synthetase (427 aa).

GTP contacts are provided by residues 12-18 and 40-42; these read GDEGKGK and GHT. The active-site Proton acceptor is the aspartate 13. Positions 13 and 40 each coordinate Mg(2+). Residues 13–16, 38–41, threonine 128, arginine 142, glutamine 223, threonine 238, and arginine 302 contribute to the IMP site; these read DEGK and NAGH. Residue histidine 41 is the Proton donor of the active site. Substrate is bound at residue 298-304; sequence VTTGRAR. GTP contacts are provided by residues arginine 304, 330–332, and 412–414; these read KLD and GVG.

The protein belongs to the adenylosuccinate synthetase family. Homodimer. Mg(2+) serves as cofactor.

Its subcellular location is the cytoplasm. The catalysed reaction is IMP + L-aspartate + GTP = N(6)-(1,2-dicarboxyethyl)-AMP + GDP + phosphate + 2 H(+). Its pathway is purine metabolism; AMP biosynthesis via de novo pathway; AMP from IMP: step 1/2. Its function is as follows. Plays an important role in the de novo pathway of purine nucleotide biosynthesis. Catalyzes the first committed step in the biosynthesis of AMP from IMP. The polypeptide is Adenylosuccinate synthetase (Parafrankia sp. (strain EAN1pec)).